The sequence spans 1086 residues: Transcription initiation factor TFIID subunit 2 (1086 aa).

Positions 1 to 11 (MDFSEASTSGD) are enriched in polar residues. Disordered stretches follow at residues 1–53 (MDFS…PPPV) and 1064–1086 (GYEAARRSPPRRDFGDETMNLMQ). Pro residues-rich tracts occupy residues 19–36 (PFPPKPREGAPPPAPPLA) and 44–53 (APPPLQPPPV). Over residues 1067 to 1078 (AARRSPPRRDFG) the composition is skewed to basic and acidic residues.

Belongs to the TAF2 family. Component of the TFIID basal transcription factor complex, composed of TATA-box-binding protein tbp-1, and a number of TBP-associated factors (TAFs).

It is found in the nucleus. The TFIID basal transcription factor complex plays a major role in the initiation of RNA polymerase II (Pol II)-dependent transcription. TFIID recognizes and binds promoters via its subunit tbp-1, a TATA-box-binding protein, and promotes assembly of the pre-initiation complex (PIC). The TFIID complex consists of tbp-1 and TBP-associated factors (TAFs), including taf-2. May regulate RNA polymerase II activity and thereby may control transcription initiation by RNA polymerase II. This Caenorhabditis elegans protein is Transcription initiation factor TFIID subunit 2.